Here is a 113-residue protein sequence, read N- to C-terminus: Cell cycle protein GpsB (113 aa).

Residues Leu-32–Gly-70 are a coiled coil.

It belongs to the GpsB family. As to quaternary structure, forms polymers through the coiled coil domains. Interacts with PBP1, MreC and EzrA.

It is found in the cytoplasm. Functionally, divisome component that associates with the complex late in its assembly, after the Z-ring is formed, and is dependent on DivIC and PBP2B for its recruitment to the divisome. Together with EzrA, is a key component of the system that regulates PBP1 localization during cell cycle progression. Its main role could be the removal of PBP1 from the cell pole after pole maturation is completed. Also contributes to the recruitment of PBP1 to the division complex. Not essential for septum formation. The protein is Cell cycle protein GpsB of Pediococcus pentosaceus (strain ATCC 25745 / CCUG 21536 / LMG 10740 / 183-1w).